Reading from the N-terminus, the 473-residue chain is Chromosomal replication initiator protein DnaA (473 aa).

Residues 1-76 (MNYHSTNVNE…RTVLGRVIGP (76 aa)) form a domain I, interacts with DnaA modulators region. The interval 76-135 (PNASLQYNALVDNSSPKYPGTVTLAGCADGGQAAEQFDVNLLHRHMPNAATHSEAQDFDT) is domain II. Residues 136–353 (QLNSRLNFRN…GTLVSLITNS (218 aa)) are domain III, AAA+ region. The ATP site is built by Gly181, Gly183, Lys184, and Thr185. The segment at 354–473 (VVVGKEIDLT…VERAEQLIAN (120 aa)) is domain IV, binds dsDNA.

This sequence belongs to the DnaA family. Oligomerizes as a right-handed, spiral filament on DNA at oriC.

It localises to the cytoplasm. In terms of biological role, plays an essential role in the initiation and regulation of chromosomal replication. ATP-DnaA binds to the origin of replication (oriC) to initiate formation of the DNA replication initiation complex once per cell cycle. Binds the DnaA box (a 9 base pair repeat at the origin) and separates the double-stranded (ds)DNA. Forms a right-handed helical filament on oriC DNA; dsDNA binds to the exterior of the filament while single-stranded (ss)DNA is stabiized in the filament's interior. The ATP-DnaA-oriC complex binds and stabilizes one strand of the AT-rich DNA unwinding element (DUE), permitting loading of DNA polymerase. After initiation quickly degrades to an ADP-DnaA complex that is not apt for DNA replication. Binds acidic phospholipids. This chain is Chromosomal replication initiator protein DnaA, found in Porphyromonas gingivalis (strain ATCC 33277 / DSM 20709 / CIP 103683 / JCM 12257 / NCTC 11834 / 2561).